Consider the following 232-residue polypeptide: Ubiquinone biosynthesis O-methyltransferase (232 aa).

R36, G55, D76, and M120 together coordinate S-adenosyl-L-methionine.

Belongs to the methyltransferase superfamily. UbiG/COQ3 family.

It catalyses the reaction a 3-demethylubiquinol + S-adenosyl-L-methionine = a ubiquinol + S-adenosyl-L-homocysteine + H(+). It carries out the reaction a 3-(all-trans-polyprenyl)benzene-1,2-diol + S-adenosyl-L-methionine = a 2-methoxy-6-(all-trans-polyprenyl)phenol + S-adenosyl-L-homocysteine + H(+). The protein operates within cofactor biosynthesis; ubiquinone biosynthesis. Its function is as follows. O-methyltransferase that catalyzes the 2 O-methylation steps in the ubiquinone biosynthetic pathway. In Burkholderia cenocepacia (strain ATCC BAA-245 / DSM 16553 / LMG 16656 / NCTC 13227 / J2315 / CF5610) (Burkholderia cepacia (strain J2315)), this protein is Ubiquinone biosynthesis O-methyltransferase.